The primary structure comprises 196 residues: Alpha-crystallin A chain (196 aa).

Methionine 1 is subject to N-acetylmethionine. Positions 1–63 (MDVTIQHPWF…RTVLDSGISE (63 aa)) are required for complex formation with BFSP1 and BFSP2. At glutamine 6 the chain carries Deamidated glutamine; partial. Phosphoserine is present on serine 45. Glutamine 50 carries the post-translational modification Deamidated glutamine; partial. The region spanning 76–185 (HAGNPKNNPV…GHSERAIPVS (110 aa)) is the sHSP domain. N6-acetyllysine occurs at positions 93 and 122. Zn(2+) is bound at residue histidine 123. The residue at position 124 (asparagine 124) is a Deamidated asparagine; partial. Glutamate 125 and histidine 130 together coordinate Zn(2+). Position 145 is a phosphoserine (serine 145). Asparagine 146 is subject to Deamidated asparagine; partial. The segment at 168–196 (KVQSGLDAGHSERAIPVSREEKPSSAPSS) is disordered. Glutamine 170 carries the post-translational modification Deamidated glutamine; partial. Residues 176 to 190 (GHSERAIPVSREEKP) are compositionally biased toward basic and acidic residues. A Zn(2+)-binding site is contributed by histidine 177. Serine 185 carries an O-linked (GlcNAc) serine glycan.

This sequence belongs to the small heat shock protein (HSP20) family. Heteropolymer composed of three CRYAA and one CRYAB subunits. Inter-subunit bridging via zinc ions enhances stability, which is crucial as there is no protein turn over in the lens. Can also form homodimers and homotetramers (dimers of dimers) which serve as the building blocks of homooligomers. Within homooligomers, the zinc-binding motif is created from residues of 3 different molecules. His-123 and Glu-125 from one molecule are ligands of the zinc ion, and His-130 and His-177 residues from additional molecules complete the site with tetrahedral coordination geometry. Part of a complex required for lens intermediate filament formation composed of BFSP1, BFSP2 and CRYAA. Post-translationally, acetylation at Lys-93 may increase chaperone activity. Undergoes age-dependent proteolytical cleavage at the C-terminus.

It is found in the cytoplasm. The protein resides in the nucleus. Functionally, contributes to the transparency and refractive index of the lens. Acts as a chaperone, preventing aggregation of various proteins under a wide range of stress conditions. Required for the correct formation of lens intermediate filaments as part of a complex composed of BFSP1, BFSP2 and CRYAA. In Mus musculus (Mouse), this protein is Alpha-crystallin A chain (Cryaa).